The primary structure comprises 298 residues: uncharacterized protein (298 aa).

It belongs to the NAD(P)-dependent epimerase/dehydratase family.

This is an uncharacterized protein from Saccharomyces cerevisiae (strain ATCC 204508 / S288c) (Baker's yeast).